Consider the following 374-residue polypeptide: F-box/kelch-repeat protein At2g24250 (374 aa).

The F-box domain maps to 14–63; it reads PDWSQLPEELLHIISTHLEDHYFDAVHARSVCRSWRSTFPFPSSLLRQSY. 2 Kelch repeats span residues 100–150 and 249–301; these read SEYF…PLGH and NFLV…LGNF.

The chain is F-box/kelch-repeat protein At2g24250 from Arabidopsis thaliana (Mouse-ear cress).